A 116-amino-acid chain; its full sequence is NADH-ubiquinone oxidoreductase chain 3 (116 aa).

3 helical membrane passes run 4-24, 56-76, and 88-108; these read LIIT…IAFW, FFLV…LLPL, and TLIL…YEWI.

Belongs to the complex I subunit 3 family. In terms of assembly, core subunit of respiratory chain NADH dehydrogenase (Complex I) which is composed of 45 different subunits. Interacts with TMEM186. Interacts with TMEM242.

It localises to the mitochondrion inner membrane. It catalyses the reaction a ubiquinone + NADH + 5 H(+)(in) = a ubiquinol + NAD(+) + 4 H(+)(out). Core subunit of the mitochondrial membrane respiratory chain NADH dehydrogenase (Complex I) which catalyzes electron transfer from NADH through the respiratory chain, using ubiquinone as an electron acceptor. Essential for the catalytic activity of complex I. The sequence is that of NADH-ubiquinone oxidoreductase chain 3 from Didelphis virginiana (North American opossum).